The following is a 410-amino-acid chain: FAS1 domain-containing protein CaO19.3004 (410 aa).

A signal peptide spans 1 to 18 (MKLSKLLQLAVFSSLVTS). 2 stretches are compositionally biased toward basic and acidic residues: residues 64–73 (NAKFKRDPKN) and 83–96 (GSAE…REPK). The disordered stretch occupies residues 64 to 98 (NAKFKRDPKNVIDPASLKEGSAEEEQKDKREPKNL). Residues 247–407 (NNLLQSILPQ…GFVLIINDSL (161 aa)) form the FAS1 domain.

The protein localises to the vacuole. In Candida albicans (strain SC5314 / ATCC MYA-2876) (Yeast), this protein is FAS1 domain-containing protein CaO19.3004.